Reading from the N-terminus, the 450-residue chain is TATA box-binding protein-associated factor RNA polymerase I subunit A (450 aa).

Component of the transcription factor SL1/TIF-IB complex, composed of TBP and at least TAF1A, TAF1B, TAF1C and TAF1D. In the complex interacts directly with TBP, TAF1A and TAF1B. Interaction of the SL1/TIF-IB subunits with TBP excludes interaction of TBP with the transcription factor IID (TFIID) subunits. Interacts with UBFT. Interacts with CEBPA (isoform 1 and isoform 4). Part of Pol I pre-initiation complex (PIC), in which Pol I core assembles with RRN3 and promoter-bound UTBF and SL1/TIF-IB complex.

Its subcellular location is the nucleus. It is found in the nucleolus. Its function is as follows. Component of the transcription factor SL1/TIF-IB complex, which is involved in the assembly of the PIC (pre-initiation complex) during RNA polymerase I-dependent transcription. The rate of PIC formation probably is primarily dependent on the rate of association of SL1/TIF-IB with the rDNA promoter. SL1/TIF-IB is involved in stabilization of nucleolar transcription factor 1/UBTF on rDNA. Formation of SL1/TIF-IB excludes the association of TBP with TFIID subunits. The chain is TATA box-binding protein-associated factor RNA polymerase I subunit A (TAF1A) from Homo sapiens (Human).